We begin with the raw amino-acid sequence, 1489 residues long: Sex-determining transformer protein 2 (1489 aa).

A signal peptide spans 1 to 33 (MKLAFNKLLVASVVFTVLSFGLLLASLFTTTAT). Helical transmembrane passes span 454-474 (MIYFILGACALMVALFAAFAF), 489-509 (GFITGLLFIFLCKSGGLILID), 513-533 (LCYITMHLAFNLVMTARVTFI), 600-620 (YWFLIAIVLVPVIGVYWFFID), 622-642 (DVQKICIVLLPAFLIAAFEEM), 749-769 (AVVVSSVAALLILLSIGLLFI), 931-951 (IFAAAVLAGFFSIIVVFFSIG), 958-978 (LAFAFFVVGNRLEIAAIVSLF), 986-1006 (YTNVAVFVGFLAAWTPFCDLA), 1041-1061 (VQIFAIFLTATILLIVITAII), and 1066-1086 (AFFIPTVILLITLLLAVFNSL). Residues 1138-1288 (EFSIRPTENT…EQQEVTDDVA (151 aa)) are interaction with fem-3. Disordered regions lie at residues 1143-1176 (PTENTKHYAPRPIDNSDPPEQAADEEVVNQDPSM), 1233-1393 (LLRQ…YPPS), and 1412-1489 (RNLP…TPGL). Composition is skewed to basic and acidic residues over residues 1275–1298 (DPAKEQQEVTDDVATRYKEEEVRK), 1326–1340 (VSREAPEDSPNREPR), and 1423–1433 (RPRDWDQRRLV). The interval 1402 to 1423 (CEDVYWKYNERNLPDNVPMPPR) is MX regulatory domain; required for tra-1 binding. Pro residues predominate over residues 1444–1456 (VPPPGRSAIPIPP). A compositionally biased stretch (basic and acidic residues) spans 1460–1482 (RLRERRREQHLREQEARRNRPES).

Interacts with tra-1 and fem-3.

It is found in the membrane. Its function is as follows. Plays a major role in controlling sexual cell fates. Promotes female development in XX animals where it sequesters one or more of the FEM proteins to the membrane thereby freeing the tra-1 protein (a putative transcription factor) to enter the nucleus and promote female development. In XO animals it acts as a receptor for her-1 which prevents it from binding to FEM proteins thereby repressing the activity of tra-1. Negatively regulates male development when bound to fem-3 and is required together with tra-1 for promoting spermatogenesis. Also required for feminizing tra-3 activity. The protein is Sex-determining transformer protein 2 of Caenorhabditis briggsae.